A 329-amino-acid chain; its full sequence is Biotin synthase (329 aa).

The Radical SAM core domain occupies 48–278; it reads FVGDKVFLCS…TKRISICGGR (231 aa). The [4Fe-4S] cluster site is built by cysteine 66, cysteine 70, and cysteine 73. 2 residues coordinate [2Fe-2S] cluster: serine 143 and cysteine 203.

It belongs to the radical SAM superfamily. Biotin synthase family. Homodimer. [4Fe-4S] cluster is required as a cofactor. It depends on [2Fe-2S] cluster as a cofactor.

The catalysed reaction is (4R,5S)-dethiobiotin + (sulfur carrier)-SH + 2 reduced [2Fe-2S]-[ferredoxin] + 2 S-adenosyl-L-methionine = (sulfur carrier)-H + biotin + 2 5'-deoxyadenosine + 2 L-methionine + 2 oxidized [2Fe-2S]-[ferredoxin]. It functions in the pathway cofactor biosynthesis; biotin biosynthesis; biotin from 7,8-diaminononanoate: step 2/2. In terms of biological role, catalyzes the conversion of dethiobiotin (DTB) to biotin by the insertion of a sulfur atom into dethiobiotin via a radical-based mechanism. This chain is Biotin synthase, found in Geotalea daltonii (strain DSM 22248 / JCM 15807 / FRC-32) (Geobacter daltonii).